The chain runs to 383 residues: Glutaminyl-peptide cyclotransferase-like protein (383 aa).

Positions 1–25 are disordered; the sequence is MPSGGRGRPRLQVGERSLLERPSPP. Residues 35–57 traverse the membrane as a helical segment; that stretch reads LLPQLLLALTVASVFYTIWRIWH. Cysteine 168 and cysteine 192 are disulfide-bonded. Aspartate 187 serves as a coordination point for Zn(2+). Glutamate 226 serves as the catalytic Proton acceptor. Residue glutamate 227 participates in Zn(2+) binding. The active-site Proton acceptor is the aspartate 270. Histidine 352 lines the Zn(2+) pocket.

The protein belongs to the glutaminyl-peptide cyclotransferase family.

It localises to the golgi apparatus membrane. It carries out the reaction N-terminal L-glutaminyl-[peptide] = N-terminal 5-oxo-L-prolyl-[peptide] + NH4(+). Responsible for the biosynthesis of pyroglutamyl peptides. The polypeptide is Glutaminyl-peptide cyclotransferase-like protein (QPCTL) (Bos taurus (Bovine)).